The following is a 224-amino-acid chain: Beta-casein (224 aa).

Positions 1-15 (MKVLILACLVALALA) are cleaved as a signal peptide. S30, S32, S33, and S34 each carry phosphoserine. The residue at position 50 (S50) is a Phosphoserine; in variant A1, variant A2, variant A3, variant B, variant E, variant F, variant G and variant H.

It belongs to the beta-casein family. In terms of tissue distribution, mammary gland specific. Secreted in milk.

The protein localises to the secreted. In terms of biological role, important role in determination of the surface properties of the casein micelles. Casoparan acts as a macrophage activator, increasing the phagocytic activity of macrophages and peroxide release from macrophages. It also acts as a bradykinin-potentiating peptide. Its function is as follows. Casohypotensin acts as a bradykinin-potentiating peptide. Induces hypotension in rats. Acts as a strong competitive inhibitor of endo-oligopeptidase A. Functionally, antioxidant peptide has antioxidant activity. In Bos taurus (Bovine), this protein is Beta-casein (CSN2).